The chain runs to 288 residues: Probable coatomer subunit epsilon (288 aa).

Phosphoserine is present on serine 262.

It belongs to the COPE family. As to quaternary structure, oligomeric complex that consists of at least the alpha, beta, beta', gamma, delta, epsilon and zeta subunits.

Its subcellular location is the cytoplasm. The protein resides in the golgi apparatus membrane. The protein localises to the cytoplasmic vesicle. It localises to the COPI-coated vesicle membrane. Functionally, the coatomer is a cytosolic protein complex that binds to dilysine motifs and reversibly associates with Golgi non-clathrin-coated vesicles, which further mediate biosynthetic protein transport from the ER, via the Golgi up to the trans Golgi network. The coatomer complex is required for budding from Golgi membranes, and is essential for the retrograde Golgi-to-ER transport of dilysine-tagged proteins. The protein is Probable coatomer subunit epsilon (sec28) of Schizosaccharomyces pombe (strain 972 / ATCC 24843) (Fission yeast).